We begin with the raw amino-acid sequence, 22 residues long: 65 kDa membrane protein (22 aa).

Residues 1–22 (AAKPLDKSSSSLHHGYSKVHVP) form a disordered region.

Its subcellular location is the cell membrane. In terms of biological role, binds various plasma and ECM-proteins. This chain is 65 kDa membrane protein, found in Staphylococcus aureus.